The following is a 127-amino-acid chain: Protein ApaG (127 aa).

The ApaG domain occupies 3 to 127 (KDKRYAFSVK…FQLNMPRVLH (125 aa)).

The chain is Protein ApaG from Methylobacillus flagellatus (strain ATCC 51484 / DSM 6875 / VKM B-1610 / KT).